Here is a 94-residue protein sequence, read N- to C-terminus: MLKPLGDRVVIELVQAEEKTASGIVLPDTAKEKPQEGKVVAVGTGRVLENGERVALEVAAGDLIIFSKYAGTEVKYEGTDYLILRESDILAVIG.

Belongs to the GroES chaperonin family. As to quaternary structure, heptamer of 7 subunits arranged in a ring. Interacts with the chaperonin GroEL.

It is found in the cytoplasm. Together with the chaperonin GroEL, plays an essential role in assisting protein folding. The GroEL-GroES system forms a nano-cage that allows encapsulation of the non-native substrate proteins and provides a physical environment optimized to promote and accelerate protein folding. GroES binds to the apical surface of the GroEL ring, thereby capping the opening of the GroEL channel. This Bacillus cereus (strain ATCC 14579 / DSM 31 / CCUG 7414 / JCM 2152 / NBRC 15305 / NCIMB 9373 / NCTC 2599 / NRRL B-3711) protein is Co-chaperonin GroES.